The primary structure comprises 311 residues: Acetyl-coenzyme A carboxylase carboxyl transferase subunit beta (311 aa).

Positions 27-296 constitute a CoA carboxyltransferase N-terminal domain; sequence LWTKCGHCSA…AEAADAPEAG (270 aa). C31, C34, C50, and C53 together coordinate Zn(2+). The C4-type zinc finger occupies 31–53; the sequence is CGHCSAVLYRPELERNQEVCPKC. Residues 286 to 299 are compositionally biased toward low complexity; it reads AAEAADAPEAGEQP. A disordered region spans residues 286-311; that stretch reads AAEAADAPEAGEQPSEATDPVGEHWD.

It belongs to the AccD/PCCB family. As to quaternary structure, acetyl-CoA carboxylase is a heterohexamer composed of biotin carboxyl carrier protein (AccB), biotin carboxylase (AccC) and two subunits each of ACCase subunit alpha (AccA) and ACCase subunit beta (AccD). Zn(2+) is required as a cofactor.

It localises to the cytoplasm. The catalysed reaction is N(6)-carboxybiotinyl-L-lysyl-[protein] + acetyl-CoA = N(6)-biotinyl-L-lysyl-[protein] + malonyl-CoA. It participates in lipid metabolism; malonyl-CoA biosynthesis; malonyl-CoA from acetyl-CoA: step 1/1. In terms of biological role, component of the acetyl coenzyme A carboxylase (ACC) complex. Biotin carboxylase (BC) catalyzes the carboxylation of biotin on its carrier protein (BCCP) and then the CO(2) group is transferred by the transcarboxylase to acetyl-CoA to form malonyl-CoA. The sequence is that of Acetyl-coenzyme A carboxylase carboxyl transferase subunit beta from Alkalilimnicola ehrlichii (strain ATCC BAA-1101 / DSM 17681 / MLHE-1).